Reading from the N-terminus, the 158-residue chain is NAD(P)H-quinone oxidoreductase subunit N (158 aa).

Belongs to the complex I NdhN subunit family. In terms of assembly, NDH-1 can be composed of about 15 different subunits; different subcomplexes with different compositions have been identified which probably have different functions.

The protein resides in the cellular thylakoid membrane. The catalysed reaction is a plastoquinone + NADH + (n+1) H(+)(in) = a plastoquinol + NAD(+) + n H(+)(out). It carries out the reaction a plastoquinone + NADPH + (n+1) H(+)(in) = a plastoquinol + NADP(+) + n H(+)(out). Functionally, NDH-1 shuttles electrons from an unknown electron donor, via FMN and iron-sulfur (Fe-S) centers, to quinones in the respiratory and/or the photosynthetic chain. The immediate electron acceptor for the enzyme in this species is believed to be plastoquinone. Couples the redox reaction to proton translocation, and thus conserves the redox energy in a proton gradient. Cyanobacterial NDH-1 also plays a role in inorganic carbon-concentration. The polypeptide is NAD(P)H-quinone oxidoreductase subunit N (Cyanothece sp. (strain PCC 7425 / ATCC 29141)).